Reading from the N-terminus, the 119-residue chain is V-type proton ATPase subunit F (119 aa).

Belongs to the V-ATPase F subunit family. As to quaternary structure, V-ATPase is a heteromultimeric enzyme made up of two complexes: the ATP-hydrolytic V1 complex and the proton translocation V0 complex. The V1 complex consists of three catalytic AB heterodimers that form a heterohexamer, three peripheral stalks each consisting of EG heterodimers, one central rotor including subunits D and F, and the regulatory subunits C and H. The proton translocation complex V0 consists of the proton transport subunit a, a ring of proteolipid subunits c9c'', rotary subunit d, subunits e and f, and the accessory subunits ATP6AP1/Ac45 and ATP6AP2/PRR.

Its subcellular location is the cytoplasmic vesicle. It is found in the secretory vesicle. The protein resides in the synaptic vesicle membrane. The protein localises to the clathrin-coated vesicle membrane. Subunit of the V1 complex of vacuolar(H+)-ATPase (V-ATPase), a multisubunit enzyme composed of a peripheral complex (V1) that hydrolyzes ATP and a membrane integral complex (V0) that translocates protons. V-ATPase is responsible for acidifying and maintaining the pH of intracellular compartments and in some cell types, is targeted to the plasma membrane, where it is responsible for acidifying the extracellular environment. The protein is V-type proton ATPase subunit F (Atp6v1f) of Mus musculus (Mouse).